Here is a 275-residue protein sequence, read N- to C-terminus: Galaxin-2 (275 aa).

An N-terminal signal peptide occupies residues methionine 1–cysteine 20.

Component of the acid-insoluble and acid-soluble organic matrix of the aragonitic skeleton (at protein level).

The protein localises to the secreted. In Acropora millepora (Staghorn coral), this protein is Galaxin-2.